We begin with the raw amino-acid sequence, 371 residues long: 4-hydroxyphenylpyruvate dioxygenase-like protein (371 aa).

2 VOC domains span residues 7–135 and 160–328; these read RLCH…LLQR and HVDH…VFTK. Positions 163, 258, and 339 each coordinate Fe cation.

It belongs to the 4HPPD family. Fe cation serves as cofactor.

It is found in the mitochondrion. The catalysed reaction is 3-(4-hydroxyphenyl)pyruvate + O2 = (S)-4-hydroxymandelate + CO2. Its function is as follows. Iron-dependent dioxygenase that catalyzes the conversion of 4-hydroxyphenylpyruvate (4-HPPA) to 4-hydroxymandelate (4-HMA) in the mitochondria, one of the steps in the biosynthesis of coenzyme Q10 from tyrosine. This chain is 4-hydroxyphenylpyruvate dioxygenase-like protein, found in Rattus norvegicus (Rat).